A 257-amino-acid polypeptide reads, in one-letter code: MLALISPAKTLDYETALPTDEFTQPRLLENSAQLIDVCRKLSASEIANLMSVSEKIATLNADRFRDWKPEFDFSNARQAIYAFKGDVYTGLDAYHLKDKDIDFAQQHLRMLSGLYGLLRPLDLMMPYRLEMGTKLKNTRGHNLYEFWDDIITNQINEDLAAIKSELLVNLASDEYYKSVNEKKIKAEIVKPVFLDQKNSKYKVISFYAKKARGLMARFIIENQLNKAEDLKAFNTEGYYFDADNSSAKELVFKRDEQ.

This sequence belongs to the UPF0246 family.

The sequence is that of UPF0246 protein A1S_2267 from Acinetobacter baumannii (strain ATCC 17978 / DSM 105126 / CIP 53.77 / LMG 1025 / NCDC KC755 / 5377).